The following is a 1060-amino-acid chain: Carbamoyl phosphate synthase large chain (1060 aa).

Residues 1-401 (MPKRTDIRKI…SLLKAVRSLE (401 aa)) form a carboxyphosphate synthetic domain region. Residues arginine 129, arginine 169, glycine 175, glycine 176, glutamine 208, isoleucine 210, glutamate 215, glycine 241, isoleucine 242, histidine 243, glutamine 284, and glutamate 298 each coordinate ATP. One can recognise an ATP-grasp 1 domain in the interval 133 to 327 (KNLMNQLNEP…IAKMAAKIAV (195 aa)). The Mg(2+) site is built by glutamine 284, glutamate 298, and asparagine 300. Mn(2+) is bound by residues glutamine 284, glutamate 298, and asparagine 300. The oligomerization domain stretch occupies residues 402-546 (IGTAHLELDG…YTTYEQENES (145 aa)). The segment at 547-929 (LVSAKPSILV…ALYKAFEASG (383 aa)) is carbamoyl phosphate synthetic domain. An ATP-grasp 2 domain is found at 671–861 (DQLIQELNIP…MAQLATQLIL (191 aa)). Arginine 707, arginine 746, leucine 748, glutamate 752, glycine 777, valine 778, histidine 779, serine 780, glutamine 820, and glutamate 832 together coordinate ATP. Positions 820, 832, and 834 each coordinate Mg(2+). Positions 820, 832, and 834 each coordinate Mn(2+). An MGS-like domain is found at 930–1060 (MHLPSHGNVL…ESQSLLTKPL (131 aa)). The allosteric domain stretch occupies residues 930–1060 (MHLPSHGNVL…ESQSLLTKPL (131 aa)).

Belongs to the CarB family. As to quaternary structure, composed of two chains; the small (or glutamine) chain promotes the hydrolysis of glutamine to ammonia, which is used by the large (or ammonia) chain to synthesize carbamoyl phosphate. Tetramer of heterodimers (alpha,beta)4. Mg(2+) serves as cofactor. Requires Mn(2+) as cofactor.

The enzyme catalyses hydrogencarbonate + L-glutamine + 2 ATP + H2O = carbamoyl phosphate + L-glutamate + 2 ADP + phosphate + 2 H(+). It catalyses the reaction hydrogencarbonate + NH4(+) + 2 ATP = carbamoyl phosphate + 2 ADP + phosphate + 2 H(+). It functions in the pathway amino-acid biosynthesis; L-arginine biosynthesis; carbamoyl phosphate from bicarbonate: step 1/1. The protein operates within pyrimidine metabolism; UMP biosynthesis via de novo pathway; (S)-dihydroorotate from bicarbonate: step 1/3. Its function is as follows. Large subunit of the glutamine-dependent carbamoyl phosphate synthetase (CPSase). CPSase catalyzes the formation of carbamoyl phosphate from the ammonia moiety of glutamine, carbonate, and phosphate donated by ATP, constituting the first step of 2 biosynthetic pathways, one leading to arginine and/or urea and the other to pyrimidine nucleotides. The large subunit (synthetase) binds the substrates ammonia (free or transferred from glutamine from the small subunit), hydrogencarbonate and ATP and carries out an ATP-coupled ligase reaction, activating hydrogencarbonate by forming carboxy phosphate which reacts with ammonia to form carbamoyl phosphate. The sequence is that of Carbamoyl phosphate synthase large chain from Latilactobacillus sakei subsp. sakei (strain 23K) (Lactobacillus sakei subsp. sakei).